The sequence spans 22 residues: Mu-conotoxin MIIIA (22 aa).

Q1 is modified (pyrrolidone carboxylic acid). 3 disulfide bridges follow: C3–C15, C4–C21, and C10–C22. Position 22 is a cysteine amide (C22).

It belongs to the conotoxin M superfamily. As to expression, expressed by the venom duct.

The protein resides in the secreted. Its function is as follows. Mu-conotoxins block voltage-gated sodium channels (Nav). This synthetic toxin potently blocks rNav1.3/SCN3A. It also moderately blocks rNav1.1/SCN1A, rNav1.2/SCN2A, rNav1.4/SCN4A, mNav1.6/SCN8A, and Nav1.7/SCN9A. sodium channels. This block is very slowly reversible. This chain is Mu-conotoxin MIIIA, found in Conus magus (Magical cone).